A 514-amino-acid polypeptide reads, in one-letter code: Na(+)/H(+) antiporter NhaB (514 aa).

12 consecutive transmembrane segments (helical) span residues 23 to 43 (LALL…PFIA), 63 to 83 (PLLP…TSAA), 97 to 117 (LLLM…LFIF), 120 to 140 (LLLS…AAAF), 144 to 164 (FLDA…FYGI), 202 to 222 (LMMH…VGEP), 238 to 258 (FFLR…LTCM), 303 to 323 (AIIG…VGLI), 357 to 377 (LTVF…APII), 391 to 411 (LFYL…VGTI), 447 to 467 (ATPN…APLI), and 475 to 495 (VWMA…CVEF).

It belongs to the NhaB Na(+)/H(+) (TC 2.A.34) antiporter family.

The protein localises to the cell inner membrane. The enzyme catalyses 2 Na(+)(in) + 3 H(+)(out) = 2 Na(+)(out) + 3 H(+)(in). In terms of biological role, na(+)/H(+) antiporter that extrudes sodium in exchange for external protons. This chain is Na(+)/H(+) antiporter NhaB, found in Salmonella paratyphi B (strain ATCC BAA-1250 / SPB7).